The chain runs to 230 residues: Cytochrome b6-f complex iron-sulfur subunit, chloroplastic (230 aa).

Residues 1-51 (MASFTLSSATPSQLCSSKNGMFAPSLALAKAGRVNVLISKERIRGMKLTCQ) constitute a chloroplast transit peptide. The chain crosses the membrane as a helical span at residues 73-93 (LLGALSLPTGYMLLPYASFFV). The Rieske domain maps to 116–212 (AAEWLKTHAP…CDVDDGKVVF (97 aa)). The [2Fe-2S] cluster site is built by Cys-158, His-160, Cys-176, and His-179. A disulfide bridge connects residues Cys-163 and Cys-178.

Belongs to the Rieske iron-sulfur protein family. As to quaternary structure, the 4 large subunits of the cytochrome b6-f complex are cytochrome b6, subunit IV (17 kDa polypeptide, petD), cytochrome f and the Rieske protein, while the 4 small subunits are petG, petL, petM and petN. The complex functions as a dimer. [2Fe-2S] cluster is required as a cofactor.

It localises to the plastid. It is found in the chloroplast thylakoid membrane. The enzyme catalyses 2 oxidized [plastocyanin] + a plastoquinol + 2 H(+)(in) = 2 reduced [plastocyanin] + a plastoquinone + 4 H(+)(out). Functionally, component of the cytochrome b6-f complex, which mediates electron transfer between photosystem II (PSII) and photosystem I (PSI), cyclic electron flow around PSI, and state transitions. The protein is Cytochrome b6-f complex iron-sulfur subunit, chloroplastic (petC) of Spinacia oleracea (Spinach).